A 645-amino-acid chain; its full sequence is Chaperone protein DnaK (645 aa).

T199 carries the post-translational modification Phosphothreonine; by autocatalysis. Disordered stretches follow at residues 509–530 (GALSDSDIEQMQKDAEANAEED) and 615–645 (EAGADAAGAAGATAGGGDDDDAIDAEFEVKE). Residues 518 to 530 (QMQKDAEANAEED) show a composition bias toward basic and acidic residues. The segment covering 615 to 626 (EAGADAAGAAGA) has biased composition (low complexity). Positions 631 to 645 (GDDDDAIDAEFEVKE) are enriched in acidic residues.

This sequence belongs to the heat shock protein 70 family.

Acts as a chaperone. This is Chaperone protein DnaK from Rhodopirellula baltica (strain DSM 10527 / NCIMB 13988 / SH1).